The following is a 364-amino-acid chain: 3-isopropylmalate dehydrogenase (364 aa).

76–89 (GPKWDGNAPEKRPE) serves as a coordination point for NAD(+). Residues Arg96, Arg106, Arg134, and Asp223 each contribute to the substrate site. Mg(2+) contacts are provided by Asp223, Asp247, and Asp251. 281–293 (GSAPDIAGTGAAN) is a binding site for NAD(+).

The protein belongs to the isocitrate and isopropylmalate dehydrogenases family. LeuB type 1 subfamily. As to quaternary structure, homodimer. The cofactor is Mg(2+). Mn(2+) is required as a cofactor.

The protein localises to the cytoplasm. The catalysed reaction is (2R,3S)-3-isopropylmalate + NAD(+) = 4-methyl-2-oxopentanoate + CO2 + NADH. Its pathway is amino-acid biosynthesis; L-leucine biosynthesis; L-leucine from 3-methyl-2-oxobutanoate: step 3/4. Its function is as follows. Catalyzes the oxidation of 3-carboxy-2-hydroxy-4-methylpentanoate (3-isopropylmalate) to 3-carboxy-4-methyl-2-oxopentanoate. The product decarboxylates to 4-methyl-2 oxopentanoate. The protein is 3-isopropylmalate dehydrogenase of Shouchella clausii (strain KSM-K16) (Alkalihalobacillus clausii).